Reading from the N-terminus, the 99-residue chain is Acylphosphatase-2 (99 aa).

The residue at position 2 (serine 2) is an N-acetylserine. An Acylphosphatase-like domain is found at serine 9–tyrosine 99. Catalysis depends on residues arginine 24 and asparagine 42. Serine 93 bears the Phosphoserine mark.

Belongs to the acylphosphatase family.

It carries out the reaction an acyl phosphate + H2O = a carboxylate + phosphate + H(+). In terms of biological role, its physiological role is not yet clear. In Bos taurus (Bovine), this protein is Acylphosphatase-2 (ACYP2).